Consider the following 120-residue polypeptide: Non-specific lipid-transfer protein (120 aa).

Positions M1 to G26 are cleaved as a signal peptide. Disulfide bonds link C40/C56, C57/C102, and C77/C116.

Belongs to the plant LTP family.

Plant non-specific lipid-transfer proteins transfer phospholipids as well as galactolipids across membranes. May play a role in wax or cutin deposition in the cell walls of expanding epidermal cells and certain secretory tissues. This Gossypium hirsutum (Upland cotton) protein is Non-specific lipid-transfer protein.